The following is a 426-amino-acid chain: Glutamyl-tRNA reductase (426 aa).

Substrate-binding positions include 49–52 (TCNR), Ser109, 114–116 (EGQ), and Gln120. The active-site Nucleophile is the Cys50. 189–194 (GAGETG) contributes to the NADP(+) binding site.

Belongs to the glutamyl-tRNA reductase family. In terms of assembly, homodimer.

The enzyme catalyses (S)-4-amino-5-oxopentanoate + tRNA(Glu) + NADP(+) = L-glutamyl-tRNA(Glu) + NADPH + H(+). It participates in porphyrin-containing compound metabolism; protoporphyrin-IX biosynthesis; 5-aminolevulinate from L-glutamyl-tRNA(Glu): step 1/2. The protein operates within porphyrin-containing compound metabolism; chlorophyll biosynthesis. Catalyzes the NADPH-dependent reduction of glutamyl-tRNA(Glu) to glutamate 1-semialdehyde (GSA). The chain is Glutamyl-tRNA reductase from Prosthecochloris aestuarii (strain DSM 271 / SK 413).